The primary structure comprises 310 residues: CRAL-TRIO domain-containing protein YKL091C (310 aa).

Positions 101–274 (ERIKLAKMYP…KYGGTSVLHN (174 aa)) constitute a CRAL-TRIO domain.

The sequence is that of CRAL-TRIO domain-containing protein YKL091C from Saccharomyces cerevisiae (strain ATCC 204508 / S288c) (Baker's yeast).